The primary structure comprises 104 residues: L-rhamnose mutarotase (104 aa).

Tyrosine 18 lines the substrate pocket. The active-site Proton donor is the histidine 22. Residues tyrosine 41 and 76–77 (WW) contribute to the substrate site.

It belongs to the rhamnose mutarotase family. Homodimer.

The protein localises to the cytoplasm. The enzyme catalyses alpha-L-rhamnose = beta-L-rhamnose. Its pathway is carbohydrate metabolism; L-rhamnose metabolism. In terms of biological role, involved in the anomeric conversion of L-rhamnose. This is L-rhamnose mutarotase from Shigella sonnei (strain Ss046).